A 205-amino-acid polypeptide reads, in one-letter code: ATP-dependent Clp protease proteolytic subunit (205 aa).

Ser-108 serves as the catalytic Nucleophile. His-133 is an active-site residue.

This sequence belongs to the peptidase S14 family. As to quaternary structure, fourteen ClpP subunits assemble into 2 heptameric rings which stack back to back to give a disk-like structure with a central cavity, resembling the structure of eukaryotic proteasomes.

Its subcellular location is the cytoplasm. The catalysed reaction is Hydrolysis of proteins to small peptides in the presence of ATP and magnesium. alpha-casein is the usual test substrate. In the absence of ATP, only oligopeptides shorter than five residues are hydrolyzed (such as succinyl-Leu-Tyr-|-NHMec, and Leu-Tyr-Leu-|-Tyr-Trp, in which cleavage of the -Tyr-|-Leu- and -Tyr-|-Trp bonds also occurs).. Cleaves peptides in various proteins in a process that requires ATP hydrolysis. Has a chymotrypsin-like activity. Plays a major role in the degradation of misfolded proteins. In Alcanivorax borkumensis (strain ATCC 700651 / DSM 11573 / NCIMB 13689 / SK2), this protein is ATP-dependent Clp protease proteolytic subunit.